The sequence spans 883 residues: Phosphoenolpyruvate carboxylase (883 aa).

Active-site residues include histidine 138 and lysine 546.

The protein belongs to the PEPCase type 1 family. Mg(2+) serves as cofactor.

The enzyme catalyses oxaloacetate + phosphate = phosphoenolpyruvate + hydrogencarbonate. In terms of biological role, forms oxaloacetate, a four-carbon dicarboxylic acid source for the tricarboxylic acid cycle. This Escherichia fergusonii (strain ATCC 35469 / DSM 13698 / CCUG 18766 / IAM 14443 / JCM 21226 / LMG 7866 / NBRC 102419 / NCTC 12128 / CDC 0568-73) protein is Phosphoenolpyruvate carboxylase.